Reading from the N-terminus, the 710-residue chain is Methionine--tRNA ligase (710 aa).

Residues 16–26 (PYANGAFHIGH) carry the 'HIGH' region motif. Cysteine 147, cysteine 150, cysteine 160, and cysteine 163 together coordinate Zn(2+). Positions 350–354 (KMSKS) match the 'KMSKS' region motif. Lysine 353 lines the ATP pocket. The 107-residue stretch at 604 to 710 (DFAKIDLRIA…PGAEPGMRVG (107 aa)) folds into the tRNA-binding domain.

It belongs to the class-I aminoacyl-tRNA synthetase family. MetG type 1 subfamily. Homodimer. It depends on Zn(2+) as a cofactor.

Its subcellular location is the cytoplasm. The enzyme catalyses tRNA(Met) + L-methionine + ATP = L-methionyl-tRNA(Met) + AMP + diphosphate. Functionally, is required not only for elongation of protein synthesis but also for the initiation of all mRNA translation through initiator tRNA(fMet) aminoacylation. This Herminiimonas arsenicoxydans protein is Methionine--tRNA ligase.